Reading from the N-terminus, the 829-residue chain is Cap-specific mRNA (nucleoside-2'-O-)-methyltransferase 1 (829 aa).

Positions 1–68 (MKRAAQASDE…DSQNSQGSMA (68 aa)) are disordered. A Bipartite nuclear localization signal motif is present at residues 2–16 (KRAAQASDEPLKKRK). Positions 31–44 (QRTTSQDSSQSESL) are enriched in low complexity. Residues 55–68 (SRPSDSQNSQGSMA) show a composition bias toward polar residues. A G-patch domain is found at 79–125 (YNNVSQKLMAKMGFREGEGLGKYGQGRKEIVEASTQRGRRGLGLMLK). Substrate-binding positions include 195–199 (KTVFD) and Arg210. In terms of domain architecture, RrmJ-type SAM-dependent 2'-O-MTase spans 223 to 442 (FFLNRAAMKM…ERYVVCKGLK (220 aa)). Residue Asn226 coordinates S-adenosyl-L-methionine. The active site involves Lys231. Residues 269–275 (CAGPGGF) and 327–328 (DI) contribute to the S-adenosyl-L-methionine site. Residue Asp356 is part of the active site. Position 366 to 368 (366 to 368 (NLQ)) interacts with substrate. Residue Lys396 is the Proton acceptor of the active site. Asn431 lines the substrate pocket. Positions 745 to 779 (KTVNDPWTMAFSKSSKRKFFYNKQTKESTYDLPAT) constitute a WW domain.

The protein localises to the nucleus. The enzyme catalyses a 5'-end (N(7)-methyl 5'-triphosphoguanosine)-ribonucleoside in mRNA + S-adenosyl-L-methionine = a 5'-end (N(7)-methyl 5'-triphosphoguanosine)-(2'-O-methyl-ribonucleoside) in mRNA + S-adenosyl-L-homocysteine + H(+). Its function is as follows. S-adenosyl-L-methionine-dependent methyltransferase that mediates mRNA cap1 2'-O-ribose methylation to the 5'-cap structure of mRNAs. Methylates the ribose of the first nucleotide of a m(7)GpppG-capped mRNA and small nuclear RNA (snRNA) to produce m(7)GpppRm (cap1). Displays a preference for cap0 transcripts. Cap1 modification is linked to higher levels of translation. May be involved in the interferon response pathway. The polypeptide is Cap-specific mRNA (nucleoside-2'-O-)-methyltransferase 1 (cmtr1) (Danio rerio (Zebrafish)).